We begin with the raw amino-acid sequence, 978 residues long: Monofunctional C1-tetrahydrofolate synthase, mitochondrial (978 aa).

Low complexity predominate over residues 1–10 (MGTRLPLVLR). A mitochondrion-targeting transit peptide spans 1 to 31 (MGTRLPLVLRQLRRPPQPPGPPRRLRVPCRA). The tract at residues 1 to 71 (MGTRLPLVLR…SPGGRTPAAR (71 aa)) is disordered. Residues 31–348 (ASSGGGGGGG…REQQHRRWRL (318 aa)) form a methylenetetrahydrofolate dehydrogenase and cyclohydrolase region. Over residues 33 to 45 (SGGGGGGGGGREG) the composition is skewed to gly residues. At K189 the chain carries N6-acetyllysine; alternate. The residue at position 189 (K189) is an N6-succinyllysine; alternate. A formyltetrahydrofolate synthetase region spans residues 349-978 (HCLKLQPLSP…TETEQVKGLF (630 aa)). S357 carries the post-translational modification Phosphoserine. Residue 423 to 430 (TPLGEGKS) participates in ATP binding. The residue at position 596 (K596) is an N6-succinyllysine.

In the N-terminal section; belongs to the tetrahydrofolate dehydrogenase/cyclohydrolase family. This sequence in the C-terminal section; belongs to the formate--tetrahydrofolate ligase family. In terms of assembly, homodimer. In terms of tissue distribution, detected in most tissues, highest expression found in placenta, thymus and brain. Low expression is found in liver and skeletal muscle. Up-regulated in colon adenocarcinoma.

Its subcellular location is the mitochondrion. It catalyses the reaction (6S)-5,6,7,8-tetrahydrofolate + formate + ATP = (6R)-10-formyltetrahydrofolate + ADP + phosphate. The protein operates within one-carbon metabolism; tetrahydrofolate interconversion. In terms of biological role, may provide the missing metabolic reaction required to link the mitochondria and the cytoplasm in the mammalian model of one-carbon folate metabolism complementing thus the enzymatic activities of MTHFD2. This is Monofunctional C1-tetrahydrofolate synthase, mitochondrial from Homo sapiens (Human).